The primary structure comprises 749 residues: Protein phosphatase 1E (749 aa).

The disordered stretch occupies residues 21–128; the sequence is EFRGPCGGGE…PPLPPLPRPL (108 aa). Repeat copies occupy residues 31 to 32, 33 to 34, and 35 to 36. The 7 X 2 AA tandem repeats of P-E stretch occupies residues 31–44; sequence PEPEPESEPEPEPE. Residues 31–45 are compositionally biased toward acidic residues; that stretch reads PEPEPESEPEPEPEA. The 4; approximate repeat unit spans residues 37–38; sequence SE. 3 consecutive repeat copies span residues 39–40, 41–42, and 43–44. Residues 46 to 55 are compositionally biased toward low complexity; the sequence is ELVAAEAAEA. Positions 69 to 102 are enriched in acidic residues; it reads ATEEGEQDQDPEPEDEAVEEETATEGEEEEEEEA. Pro residues predominate over residues 110 to 126; the sequence is VPPPPQPQLPPLPPLPR. In terms of domain architecture, PPM-type phosphatase spans 224-485; that stretch reads QIYYETSIHA…DNITVIVVFL (262 aa). Aspartate 270, glycine 271, aspartate 432, and aspartate 476 together coordinate Mn(2+). Residues 495-537 are disordered; sequence SEESEWTENSFQGGQEDGGDDKETHGECKRPWPQHQCSAPADL. A compositionally biased stretch (basic and acidic residues) spans 515–524; the sequence is DKETHGECKR. A phosphoserine mark is found at serine 532 and serine 545. The segment at 608 to 627 is disordered; sequence VKSSLPERSGAGEPRVSFNL.

The protein belongs to the PP2C family. As to quaternary structure, heterotrimer. Interacts with PAX1 and ARHGEF6 (or ARHGEF7). It depends on Mg(2+) as a cofactor. Mn(2+) is required as a cofactor.

The protein resides in the nucleus. Its subcellular location is the cytoplasm. It carries out the reaction O-phospho-L-seryl-[protein] + H2O = L-seryl-[protein] + phosphate. The catalysed reaction is O-phospho-L-threonyl-[protein] + H2O = L-threonyl-[protein] + phosphate. Protein phosphatase that inactivates multifunctional CaM kinases such as CAMK4 and CAMK2. Dephosphorylates and inactivates PAK. May play a role in the inhibition of actin fiber stress breakdown and in morphological changes driven by TNK2/CDC42. Dephosphorylates PRKAA2. In Mus musculus (Mouse), this protein is Protein phosphatase 1E (Ppm1e).